The chain runs to 217 residues: Outer-membrane lipoprotein LolB (217 aa).

The N-terminal stretch at 1 to 20 is a signal peptide; that stretch reads MSKTVRTLALGGLVLAGLSA. The N-palmitoyl cysteine moiety is linked to residue Cys-21. Cys-21 carries S-diacylglycerol cysteine lipidation. The interval 105–124 is disordered; sequence DTTSGAGRLEGLEGGPRSGP.

Belongs to the LolB family. In terms of assembly, monomer.

The protein localises to the cell outer membrane. Its function is as follows. Plays a critical role in the incorporation of lipoproteins in the outer membrane after they are released by the LolA protein. This chain is Outer-membrane lipoprotein LolB, found in Xanthomonas axonopodis pv. citri (strain 306).